Here is a 110-residue protein sequence, read N- to C-terminus: Parvalbumin alpha (110 aa).

An N-acetylserine modification is found at Ser2. A phosphoserine mark is found at Ser2 and Ser24. EF-hand domains are found at residues 39–74 and 78–110; these read KSADDVKKVFHILDKDKSGFIEEDELGFILKGFSPD and LSAKETKTLMAAGDKDGDGKIGVDEFSTLVAES. 11 residues coordinate Ca(2+): Asp52, Asp54, Ser56, Phe58, Glu60, Glu63, Asp91, Asp93, Asp95, Lys97, and Glu102.

The protein belongs to the parvalbumin family.

Functionally, in muscle, parvalbumin is thought to be involved in relaxation after contraction. It binds two calcium ions. The sequence is that of Parvalbumin alpha (PVALB) from Macaca fuscata fuscata (Japanese macaque).